The following is a 1295-amino-acid chain: Phosphoribosylformylglycinamidine synthase (1295 aa).

The segment at 304-326 (WPGAATGSGGEIRDEGATGRGAK) is disordered. Residues 306–317 (GAATGSGGEIRD), 385–387 (TGY), and A677 contribute to the ATP site. 4 residues coordinate Mg(2+): D678, E717, N721, and D884. A compositionally biased stretch (basic and acidic residues) spans 995–1012 (LRDNPESADQEHASRQDD). Positions 995–1017 (LRDNPESADQEHASRQDDNDPGL) are disordered. Residues 1042-1295 (VAVLREQGVN…LFRNARKQLG (254 aa)) form the Glutamine amidotransferase type-1 domain. Catalysis depends on C1135, which acts as the Nucleophile. Residues H1260 and E1262 contribute to the active site.

It in the N-terminal section; belongs to the FGAMS family. Monomer.

The protein resides in the cytoplasm. It catalyses the reaction N(2)-formyl-N(1)-(5-phospho-beta-D-ribosyl)glycinamide + L-glutamine + ATP + H2O = 2-formamido-N(1)-(5-O-phospho-beta-D-ribosyl)acetamidine + L-glutamate + ADP + phosphate + H(+). The protein operates within purine metabolism; IMP biosynthesis via de novo pathway; 5-amino-1-(5-phospho-D-ribosyl)imidazole from N(2)-formyl-N(1)-(5-phospho-D-ribosyl)glycinamide: step 1/2. In terms of biological role, phosphoribosylformylglycinamidine synthase involved in the purines biosynthetic pathway. Catalyzes the ATP-dependent conversion of formylglycinamide ribonucleotide (FGAR) and glutamine to yield formylglycinamidine ribonucleotide (FGAM) and glutamate. In Sodalis glossinidius (strain morsitans), this protein is Phosphoribosylformylglycinamidine synthase.